A 691-amino-acid polypeptide reads, in one-letter code: Elongation factor G (691 aa).

Residues 8 to 282 enclose the tr-type G domain; the sequence is NKTRNIGIMA…AVVEFLPAPV (275 aa). GTP contacts are provided by residues 17–24, 81–85, and 135–138; these read AHIDAGKT, DTPGH, and NKMD.

Belongs to the TRAFAC class translation factor GTPase superfamily. Classic translation factor GTPase family. EF-G/EF-2 subfamily.

The protein localises to the cytoplasm. Functionally, catalyzes the GTP-dependent ribosomal translocation step during translation elongation. During this step, the ribosome changes from the pre-translocational (PRE) to the post-translocational (POST) state as the newly formed A-site-bound peptidyl-tRNA and P-site-bound deacylated tRNA move to the P and E sites, respectively. Catalyzes the coordinated movement of the two tRNA molecules, the mRNA and conformational changes in the ribosome. The sequence is that of Elongation factor G from Heliobacterium modesticaldum (strain ATCC 51547 / Ice1).